The primary structure comprises 189 residues: Thymidine kinase (189 aa).

ATP-binding positions include 9–16 and 85–88; these read GTMNSGKS and DEAQ. E86 (proton acceptor) is an active-site residue. Zn(2+) contacts are provided by C143, C146, C180, and H183.

The protein belongs to the thymidine kinase family. As to quaternary structure, homotetramer.

The protein localises to the cytoplasm. It catalyses the reaction thymidine + ATP = dTMP + ADP + H(+). The sequence is that of Thymidine kinase from Lactococcus lactis subsp. lactis (strain IL1403) (Streptococcus lactis).